The sequence spans 299 residues: ATP phosphoribosyltransferase (299 aa).

Belongs to the ATP phosphoribosyltransferase family. Long subfamily. Mg(2+) serves as cofactor.

Its subcellular location is the cytoplasm. It catalyses the reaction 1-(5-phospho-beta-D-ribosyl)-ATP + diphosphate = 5-phospho-alpha-D-ribose 1-diphosphate + ATP. Its pathway is amino-acid biosynthesis; L-histidine biosynthesis; L-histidine from 5-phospho-alpha-D-ribose 1-diphosphate: step 1/9. Its activity is regulated as follows. Feedback inhibited by histidine. Functionally, catalyzes the condensation of ATP and 5-phosphoribose 1-diphosphate to form N'-(5'-phosphoribosyl)-ATP (PR-ATP). Has a crucial role in the pathway because the rate of histidine biosynthesis seems to be controlled primarily by regulation of HisG enzymatic activity. This chain is ATP phosphoribosyltransferase, found in Campylobacter lari (strain RM2100 / D67 / ATCC BAA-1060).